The following is a 23-amino-acid chain: Protein male-specific 40 (23 aa).

During early embryogenesis expression is initially detected at the early cleavage stages in the nucleus of two discrete cells. Subsequently, expression is abundant in the cytoplasm of the newly formed pole cells. Male-specific expression during the third larval instar.

It localises to the cytoplasm. The protein localises to the nucleus. The polypeptide is Protein male-specific 40 (Drosophila melanogaster (Fruit fly)).